The following is a 265-amino-acid chain: Apolipoprotein A-I (265 aa).

The first 18 residues, 1 to 18 (MKAVVLTLAVLFLTGSQA), serve as a signal peptide directing secretion. Tandem repeats lie at residues 67–88 (LKLLDNWDSLGSTFTKVREQLG) and 89–110 (PVTQEFWDNLEKETEALRQEMS). Residues 67-265 (LKLLDNWDSL…DEASKKLNAQ (199 aa)) are 10 X approximate tandem repeats. Residue Met-109 is modified to Methionine sulfoxide. Residues 111–121 (KDLEEVKKKVQ) form a 3; half-length repeat. Tandem repeats lie at residues 122–142 (PYLDDFQNKWQEEMETYRQKM), 144–165 (PLGAEFREGARQKVQELQEKLS), 166–187 (PLAEELRDRLRAHVEALRQHVA), 188–209 (PYSDDLRQRMAARFEALKEGGG), and 210–230 (SLAEYQAKAQEQLKALGEKAK). Methionine sulfoxide is present on Met-135. The stretch at 231–241 (PALEDLRQGLL) is one 9; half-length repeat. The stretch at 242-265 (PVLENLKVSILAAIDEASKKLNAQ) is repeat 10.

The protein belongs to the apolipoprotein A1/A4/E family. In terms of assembly, homodimer. Interacts with APOA1BP and CLU. Component of a sperm activating protein complex (SPAP), consisting of APOA1, an immunoglobulin heavy chain, an immunoglobulin light chain and albumin. Interacts with NDRG1. Interacts with SCGB3A2. Interacts with NAXE and YJEFN3. In terms of processing, glycosylated. Palmitoylated. Post-translationally, phosphorylation sites are present in the extracellular medium. In terms of tissue distribution, major protein of plasma HDL, also found in chylomicrons. Synthesized predominantly in the intestine and the liver.

The protein resides in the secreted. Its function is as follows. Participates in the reverse transport of cholesterol from tissues to the liver for excretion by promoting cholesterol efflux from tissues and by acting as a cofactor for the lecithin cholesterol acyltransferase (LCAT). As part of the SPAP complex, activates spermatozoa motility. This is Apolipoprotein A-I (APOA1) from Sus scrofa (Pig).